The sequence spans 489 residues: Probable capsid protein (489 aa).

Over residues 87–101 (RMERGESSETKREQQ) the composition is skewed to basic and acidic residues. The disordered stretch occupies residues 87–111 (RMERGESSETKREQQDLGATRKRKI). The short motif at 107 to 110 (RKRK) is the Nuclear localization signal element. A CCHC-type zinc finger spans residues 409 to 426 (CRCWICTEEGHYANECPN). The tract at residues 466-489 (ETTSEEESTTDSDSSSSDDEQLSF) is disordered.

Belongs to the caulimoviridae capsid protein family. In terms of assembly, interacts (via nuclear localization signal) with host importin alpha.

The protein localises to the virion. It is found in the host nucleus. Self assembles to form an icosahedral capsid, about 50 nm in diameter, nm, composed of 420 subunits of the viral capsid protein. The capsid encapsulates the genomic dsDNA. Following virus entry into host cell, provides nuclear import of the viral genome. Virus particles do not enter the nucleus, but dock at the nuclear membrane through the interaction with host importins. The protein is Probable capsid protein of Scrophularia californica (California bee plant).